A 244-amino-acid chain; its full sequence is Phosphoadenosine 5'-phosphosulfate reductase (244 aa).

Cys239 acts as the Nucleophile; cysteine thiosulfonate intermediate in catalysis.

The protein belongs to the PAPS reductase family. CysH subfamily.

It localises to the cytoplasm. The enzyme catalyses [thioredoxin]-disulfide + sulfite + adenosine 3',5'-bisphosphate + 2 H(+) = [thioredoxin]-dithiol + 3'-phosphoadenylyl sulfate. The protein operates within sulfur metabolism; hydrogen sulfide biosynthesis; sulfite from sulfate: step 3/3. Catalyzes the formation of sulfite from phosphoadenosine 5'-phosphosulfate (PAPS) using thioredoxin as an electron donor. The protein is Phosphoadenosine 5'-phosphosulfate reductase of Serratia proteamaculans (strain 568).